We begin with the raw amino-acid sequence, 254 residues long: Major prion protein (254 aa).

Positions 1-28 (MANLGYWLLALFVTTCTDVGLCKKRPKP) are cleaved as a signal peptide. An interaction with ADGRG6 region spans residues 23–38 (KKRPKPGGWNTGGSRY). Residues 23 to 231 (KKRPKPGGWN…SQAYYDGRRS (209 aa)) form an interaction with GRB2, ERI3 and SYN1 region. The tract at residues 24 to 107 (KRPKPGGWNT…QWNKPSKPKT (84 aa)) is disordered. A run of 5 repeats spans residues 51–59 (PQSGGTWGQ), 60–67 (PHGGGWGQ), 68–75 (PHGGGWGQ), 76–83 (PHGGGWGQ), and 84–91 (PHGGGWSQ). Positions 51–91 (PQSGGTWGQPHGGGWGQPHGGGWGQPHGGGWGQPHGGGWSQ) are 5 X 8 AA tandem repeats of P-H-G-G-G-W-G-Q. Residues 55–95 (GTWGQPHGGGWGQPHGGGWGQPHGGGWGQPHGGGWSQGGGT) are compositionally biased toward gly residues. Cu(2+)-binding residues include His61, Gly62, Gly63, His69, Gly70, Gly71, His77, Gly78, Gly79, His85, Gly86, and Gly87. Cys179 and Cys214 are disulfide-bonded. N-linked (GlcNAc...) asparagine glycans are attached at residues Asn181 and Asn197. Residue Ser231 is the site of GPI-anchor amidated serine attachment. The propeptide at 232–254 (SAVLFSSPPVILLISFLIFLIVG) is removed in mature form.

It belongs to the prion family. Monomer and homodimer. Has a tendency to aggregate into amyloid fibrils containing a cross-beta spine, formed by a steric zipper of superposed beta-strands. Soluble oligomers may represent an intermediate stage on the path to fibril formation. Copper binding may promote oligomerization. Interacts with GRB2, APP, ERI3/PRNPIP and SYN1. Mislocalized cytosolically exposed PrP interacts with MGRN1; this interaction alters MGRN1 subcellular location and causes lysosomal enlargement. Interacts with APP. Interacts with KIAA1191. Interacts with ADGRG6.

Its subcellular location is the cell membrane. The protein localises to the golgi apparatus. Its primary physiological function is unclear. May play a role in neuronal development and synaptic plasticity. May be required for neuronal myelin sheath maintenance. May promote myelin homeostasis through acting as an agonist for ADGRG6 receptor. May play a role in iron uptake and iron homeostasis. Soluble oligomers are toxic to cultured neuroblastoma cells and induce apoptosis (in vitro). Association with GPC1 (via its heparan sulfate chains) targets PRNP to lipid rafts. Also provides Cu(2+) or Zn(2+) for the ascorbate-mediated GPC1 deaminase degradation of its heparan sulfate side chains. This Rattus norvegicus (Rat) protein is Major prion protein (Prnp).